The following is a 575-amino-acid chain: Arginine--tRNA ligase (575 aa).

The short motif at 131 to 141 is the 'HIGH' region element; the sequence is ANPNGPLHIGH.

This sequence belongs to the class-I aminoacyl-tRNA synthetase family.

Its subcellular location is the cytoplasm. The catalysed reaction is tRNA(Arg) + L-arginine + ATP = L-arginyl-tRNA(Arg) + AMP + diphosphate. This Methanobrevibacter smithii (strain ATCC 35061 / DSM 861 / OCM 144 / PS) protein is Arginine--tRNA ligase.